Here is a 213-residue protein sequence, read N- to C-terminus: MQPYQRDFIRFAIDRGVLRFGEFTLKSGRTSPYFFNAGLFNTGSALAELGRCYAAAIVDSKIPFDVLFGPAYKGIPLAATTAVALADQHQLDVPWCFNRKEAKDHGEGGSLVGAPLAGDVLIIDDVITAGTAIREVMQIINAQQAKAAGVLIALNREERGNGELSAIQEVERDFGIPVVSIVSLTQVLEFLADDPQLKQHLPAVEAYRAQYGI.

K26 lines the 5-phospho-alpha-D-ribose 1-diphosphate pocket. 34-35 contacts orotate; sequence FF. Residues 72–73, R99, K100, K103, H105, and 124–132 contribute to the 5-phospho-alpha-D-ribose 1-diphosphate site; these read YK and DDVITAGTA. Positions 128 and 156 each coordinate orotate.

The protein belongs to the purine/pyrimidine phosphoribosyltransferase family. PyrE subfamily. In terms of assembly, homodimer. The cofactor is Mg(2+).

It carries out the reaction orotidine 5'-phosphate + diphosphate = orotate + 5-phospho-alpha-D-ribose 1-diphosphate. The protein operates within pyrimidine metabolism; UMP biosynthesis via de novo pathway; UMP from orotate: step 1/2. Its function is as follows. Catalyzes the transfer of a ribosyl phosphate group from 5-phosphoribose 1-diphosphate to orotate, leading to the formation of orotidine monophosphate (OMP). This is Orotate phosphoribosyltransferase from Pseudomonas putida (strain GB-1).